Here is a 510-residue protein sequence, read N- to C-terminus: GMP synthase [glutamine-hydrolyzing] (510 aa).

The Glutamine amidotransferase type-1 domain occupies 5-195; it reads KILVLDFGGQ…LFKVCGVKGT (191 aa). C82 acts as the Nucleophile in catalysis. Residues H169 and E171 contribute to the active site. The GMPS ATP-PPase domain occupies 196 to 385; that stretch reads WNMADFINEE…LGLPDEIVWR (190 aa). Position 223–229 (223–229) interacts with ATP; the sequence is SGGVDSA.

As to quaternary structure, homodimer.

The enzyme catalyses XMP + L-glutamine + ATP + H2O = GMP + L-glutamate + AMP + diphosphate + 2 H(+). It functions in the pathway purine metabolism; GMP biosynthesis; GMP from XMP (L-Gln route): step 1/1. In terms of biological role, catalyzes the synthesis of GMP from XMP. The polypeptide is GMP synthase [glutamine-hydrolyzing] (Halothermothrix orenii (strain H 168 / OCM 544 / DSM 9562)).